Consider the following 584-residue polypeptide: uncharacterized protein (584 aa).

PbH1 repeat units follow at residues 100–128 (QENITISGGQIIGERDEHTYASAGIRSTH), 139–161 (CSNVVIDDVKISDFTGDGIIVSP), 173–195 (SEQIIIRRCEVRRSRRNNISITG), 196–225 (CDMVTVEECLIEDAGTGNGTAPKFGIDIEG), 236–266 (PINVSIRNNHFVGNVSSSVTNFNGYGILIEG), 313–333 (TSDAVIAGNLITGFSTGIDVR), 334–356 (GKSVLVTNNKISNFENTGILVYQ), 357–382 (SSDVKVDGNQIQNGLSETRRSIGLRA), 406–427 (GGNMIIKDNLLRKFSRGIWIAQ), 456–478 (NAGAIIKNNTFKEFKNYPIYCST), and 529–554 (SAGSIISGNTINNLSAGTATAIQTNT).

This is an uncharacterized protein from Bacillus subtilis (strain 168).